Reading from the N-terminus, the 336-residue chain is Tetraacyldisaccharide 4'-kinase (336 aa).

Residue 60–67 (TAGGNGKT) participates in ATP binding.

It belongs to the LpxK family.

The enzyme catalyses a lipid A disaccharide + ATP = a lipid IVA + ADP + H(+). It participates in glycolipid biosynthesis; lipid IV(A) biosynthesis; lipid IV(A) from (3R)-3-hydroxytetradecanoyl-[acyl-carrier-protein] and UDP-N-acetyl-alpha-D-glucosamine: step 6/6. Transfers the gamma-phosphate of ATP to the 4'-position of a tetraacyldisaccharide 1-phosphate intermediate (termed DS-1-P) to form tetraacyldisaccharide 1,4'-bis-phosphate (lipid IVA). The sequence is that of Tetraacyldisaccharide 4'-kinase from Vibrio cholerae serotype O1 (strain ATCC 39315 / El Tor Inaba N16961).